Here is a 343-residue protein sequence, read N- to C-terminus: MTTDTTGRTGKPAAAASPERFRYGFLKGNPQLTKNGELKHLLSIEGLPRSIVNHILDTAEQFVSVTDREVKKVPLLRGKSVFNLFFENSTRTRTTFEIAATRLSADVLNLNINASSTSKGESLLDTINNLSAMHADLFVVRHASSGAPYLIAEHCAPHVHVINAGDGRHAHPTQGLLDMYTIRHYKRDFTKLRVAIVGDILHSRVARSDIHALTTLGVPEVRAIGPRTLLPGGLEQMGVKVFHNLDEGLKGVDVIIMLRLQNERMSGALLPSAQEYFKTWGLTPERLALAAPDAIVMHPGPMNRGVEIDSQVADGPQSVILNQVTFGIAVRMAVMGIVAGNSD.

Residues arginine 91 and threonine 92 each coordinate carbamoyl phosphate. Lysine 119 is an L-aspartate binding site. Arginine 141, histidine 171, and glutamine 174 together coordinate carbamoyl phosphate. L-aspartate is bound by residues arginine 204 and arginine 259. Carbamoyl phosphate is bound by residues glycine 300 and proline 301.

This sequence belongs to the aspartate/ornithine carbamoyltransferase superfamily. ATCase family. In terms of assembly, heterododecamer (2C3:3R2) of six catalytic PyrB chains organized as two trimers (C3), and six regulatory PyrI chains organized as three dimers (R2).

The enzyme catalyses carbamoyl phosphate + L-aspartate = N-carbamoyl-L-aspartate + phosphate + H(+). It functions in the pathway pyrimidine metabolism; UMP biosynthesis via de novo pathway; (S)-dihydroorotate from bicarbonate: step 2/3. Its function is as follows. Catalyzes the condensation of carbamoyl phosphate and aspartate to form carbamoyl aspartate and inorganic phosphate, the committed step in the de novo pyrimidine nucleotide biosynthesis pathway. The polypeptide is Aspartate carbamoyltransferase catalytic subunit (Burkholderia vietnamiensis (strain G4 / LMG 22486) (Burkholderia cepacia (strain R1808))).